The sequence spans 251 residues: CDP-diacylglycerol pyrophosphatase (251 aa).

The helical transmembrane segment at 5-25 (GYFLLAVIVIVAAAGVGYWKF) threads the bilayer.

The protein belongs to the Cdh family.

The protein localises to the cell inner membrane. The catalysed reaction is a CDP-1,2-diacyl-sn-glycerol + H2O = a 1,2-diacyl-sn-glycero-3-phosphate + CMP + 2 H(+). It participates in phospholipid metabolism; CDP-diacylglycerol degradation; phosphatidate from CDP-diacylglycerol: step 1/1. In Salmonella typhi, this protein is CDP-diacylglycerol pyrophosphatase.